The primary structure comprises 143 residues: Peptide methionine sulfoxide reductase MsrB (143 aa).

In terms of domain architecture, MsrB spans 5-127; it reads KEKRLKELNR…NSAALKFIPK (123 aa). The Nucleophile role is filled by cysteine 116.

Belongs to the MsrB Met sulfoxide reductase family.

The enzyme catalyses L-methionyl-[protein] + [thioredoxin]-disulfide + H2O = L-methionyl-(R)-S-oxide-[protein] + [thioredoxin]-dithiol. This is Peptide methionine sulfoxide reductase MsrB from Bacillus pumilus (strain SAFR-032).